The sequence spans 613 residues: Zinc metalloproteinase-disintegrin-like MTP4 (613 aa).

The signal sequence occupies residues 1 to 20 (MIEVLLVTICFTVFPYQGSS). Residues 21 to 191 (IILESGNVND…DEPIEKISQL (171 aa)) constitute a propeptide that is removed on maturation. The Peptidase M12B domain occupies 205–401 (KYIELYVVVD…VRPQCILNKP (197 aa)). Residue Glu-208 coordinates Ca(2+). The N-linked (GlcNAc...) asparagine glycan is linked to Asn-282. Asp-292 is a Ca(2+) binding site. 3 disulfides stabilise this stretch: Cys-316–Cys-396, Cys-356–Cys-380, and Cys-358–Cys-363. The Zn(2+) site is built by His-341, His-345, and His-351. Residues Cys-396, Asn-399, Asn-414, Phe-416, Glu-418, Glu-421, and Asp-424 each contribute to the Ca(2+) site. The 87-residue stretch at 409–495 (PPVCGNYFVE…KCPTDSFQRN (87 aa)) folds into the Disintegrin domain. Disulfide bonds link Cys-412–Cys-441, Cys-423–Cys-436, Cys-425–Cys-431, Cys-435–Cys-458, Cys-449–Cys-455, Cys-454–Cys-480, Cys-467–Cys-487, Cys-474–Cys-506, Cys-499–Cys-511, Cys-518–Cys-568, Cys-533–Cys-575, Cys-543–Cys-577, Cys-546–Cys-556, Cys-563–Cys-601, and Cys-595–Cys-606. Asn-437 carries an N-linked (GlcNAc...) asparagine glycan. Residues 473-475 (DCD) carry the D/ECD-tripeptide motif. Ca(2+) is bound by residues Asp-475, Leu-476, Glu-478, and Asp-490. A hypervariable region that may play important roles toward cell migration region spans residues 561–574 (KMCGKLLCEKGNAT). N-linked (GlcNAc...) asparagine glycosylation is present at Asn-572.

It belongs to the venom metalloproteinase (M12B) family. P-III subfamily. As to quaternary structure, monomer. Zn(2+) is required as a cofactor. As to expression, expressed by the venom gland.

The protein resides in the secreted. Its function is as follows. Snake venom zinc metalloproteinase that may impair hemostasis in the prey. The polypeptide is Zinc metalloproteinase-disintegrin-like MTP4 (Drysdalia coronoides (White-lipped snake)).